Consider the following 337-residue polypeptide: Palmitoyltransferase ZDHHC15 (337 aa).

Over 1-20 the chain is Cytoplasmic; it reads MRRGWKMALSGGLRCCRRVL. The helical transmembrane segment at 21–41 threads the bilayer; the sequence is SWVPVLVIVLVVLWSYYAYVF. Residues 42-56 are Lumenal-facing; sequence ELCLVTVLSPAEKVI. The chain crosses the membrane as a helical span at residues 57–77; sequence YLILYHAIFVFFAWTYWKSIF. At 78–172 the chain is on the cytoplasmic side; sequence TLPQQPNQKF…NNCIGFSNYK (95 aa). Residues 129 to 179 form the DHHC domain; the sequence is RFCDRCHLIKPDRCHHCSVCAMCVLKMDHHCPWVNNCIGFSNYKFFLQFLA. 7 residues coordinate Zn(2+): cysteine 131, cysteine 134, histidine 144, cysteine 145, cysteine 148, cysteine 151, and histidine 158. The S-palmitoyl cysteine intermediate role is filled by cysteine 159. Position 165 (cysteine 165) interacts with Zn(2+). A helical membrane pass occupies residues 173-193; it reads FFLQFLAYSVLYCLYIATTVF. The Lumenal portion of the chain corresponds to 194–210; it reads SYFIKYWRGELPSVRSK. Residues 211 to 234 form a helical membrane-spanning segment; sequence FHVLFLLFVACMFFVSLVILFGYH. Residues 235–337 are Cytoplasmic-facing; that stretch reads CWLVSRNKTT…SSSLAVESET (103 aa). The disordered stretch occupies residues 293-337; it reads HSFPMRSMNESQNPLLANEEPWEDNEDDSRDYPEGSSSLAVESET. The span at 312–321 shows a compositional bias: acidic residues; the sequence is EPWEDNEDDS. A compositionally biased stretch (polar residues) spans 327–337; it reads GSSSLAVESET.

This sequence belongs to the DHHC palmitoyltransferase family. Autopalmitoylated (in vitro). Expressed mainly in brain.

It localises to the golgi apparatus membrane. It is found in the postsynaptic density. It catalyses the reaction L-cysteinyl-[protein] + hexadecanoyl-CoA = S-hexadecanoyl-L-cysteinyl-[protein] + CoA. The enzyme catalyses L-cysteinyl-[protein] + tetradecanoyl-CoA = S-tetradecanoyl-L-cysteinyl-[protein] + CoA. The catalysed reaction is L-cysteinyl-[protein] + octadecanoyl-CoA = S-octadecanoyl-L-cysteinyl-[protein] + CoA. Its activity is regulated as follows. Inhibited by 2-bromopalmitate. In terms of biological role, palmitoyltransferase that catalyzes the addition of palmitate onto various protein substrates. Has no stringent fatty acid selectivity and in addition to palmitate can also transfer onto target proteins myristate from tetradecanoyl-CoA and stearate from octadecanoyl-CoA. Palmitoylates IGF2R and SORT1, promoting their partitioning to an endosomal membrane subdomain where they can interact with the retromer cargo-selective complex. Thereby, regulates retrograde transport from endosomes to the Golgi apparatus of these lysosomal sorting receptors and plays a role in trafficking of lysosomal proteins. In the nervous system, catalyzes the palmitoylation of DLG4/PSD95 and regulates its synaptic clustering and function in synaptogenesis. Could be involved in the differentiation of dopaminergic neurons and the development of the diencephalon. Could also catalyze the palmitoylation of GAP43. Could also palmitoylate DNAJC5 and regulate its localization to the Golgi membrane. Could also palmitoylate FYN as shown in vitro. May palmitoylate CALHM3 subunit of gustatory voltage-gated ion channels and modulate channel gating and kinetics. This chain is Palmitoyltransferase ZDHHC15, found in Mus musculus (Mouse).